Consider the following 129-residue polypeptide: MDLQVQIIXFLLISVTVIMSRGENVLTQSPAIMAASLGQKVTMTCSASSSVSSSYLHWYQQKSGASPKPLIHRTSNLASGVPARFSGSGSGTSYSLTISSVEAEDDATYYCQQWSGYPFGSGTKLEIKR.

Positions 1–22 (MDLQVQIIXFLLISVTVIMSRG) are cleaved as a signal peptide. The tract at residues 23-45 (ENVLTQSPAIMAASLGQKVTMTC) is framework-1. C45 and C111 are joined by a disulfide. The tract at residues 46-57 (SASSSVSSSYLH) is complementarity-determining-1. The interval 58–72 (WYQQKSGASPKPLIH) is framework-2. The interval 73–79 (RTSNLAS) is complementarity-determining-2. Residues 80–111 (GVPARFSGSGSGTSYSLTISSVEAEDDATYYC) are framework-3. Residues 112–118 (QQWSGYP) form a complementarity-determining-3 region. The segment at 119 to 128 (FGSGTKLEIK) is framework-4.

In Mus musculus (Mouse), this protein is Ig kappa chain V-IV region S107B.